The chain runs to 275 residues: NH(3)-dependent NAD(+) synthetase (275 aa).

46-53 (GISGGQDS) is an ATP binding site. Asp-52 provides a ligand contact to Mg(2+). Arg-140 is a deamido-NAD(+) binding site. ATP is bound at residue Thr-160. Glu-165 lines the Mg(2+) pocket. Lys-173 and Asp-180 together coordinate deamido-NAD(+). ATP-binding residues include Lys-189 and Thr-211. 260–261 (HK) lines the deamido-NAD(+) pocket.

The protein belongs to the NAD synthetase family. Homodimer.

The catalysed reaction is deamido-NAD(+) + NH4(+) + ATP = AMP + diphosphate + NAD(+) + H(+). It functions in the pathway cofactor biosynthesis; NAD(+) biosynthesis; NAD(+) from deamido-NAD(+) (ammonia route): step 1/1. In terms of biological role, catalyzes the ATP-dependent amidation of deamido-NAD to form NAD. Uses ammonia as a nitrogen source. In Shigella boydii serotype 4 (strain Sb227), this protein is NH(3)-dependent NAD(+) synthetase.